A 419-amino-acid chain; its full sequence is MQKLIIHGGKPLKGNINISGAKNAVLPIMAASILTDKLHITNVPKLTDVSTMKDLLRSHGACIEIIEHTDEFELIINTGNINNFTADYEIVRKMRASIWVLGPLLTKYGKAKVSLPGGCAIGARQVDLHIAVLKAMGATIEIEDGYINASSKGRLKGTHFVFDKVSVGATINAILAAVLAEGETVLFNCALEPEIVDLCNCLIKMGADIAGVGTSEITIKGKDSLNKMSYKVLSDRIEAGTYMFAAAITKGDVKICGIDYHIIENIALKLIETGIKVAPINNGVQVTYEGTLNSVDLETNPYPGFATDLQAQFMSLMTLSSGVSMITENIFENRFMHVPELCRMGADIVVRGNKAVVRGVEMLKGAEVMASDLRASVSLILAGLSTNSKTVLHRIYHLDRGFQDLEKKLSNCGADIKRV.

Phosphoenolpyruvate is bound at residue 22-23 (KN). Arg95 is a binding site for UDP-N-acetyl-alpha-D-glucosamine. Cys119 (proton donor) is an active-site residue. Residue Cys119 is modified to 2-(S-cysteinyl)pyruvic acid O-phosphothioketal. Residues 164–167 (KVSV), Asp308, and Ile330 contribute to the UDP-N-acetyl-alpha-D-glucosamine site.

This sequence belongs to the EPSP synthase family. MurA subfamily.

The protein resides in the cytoplasm. The enzyme catalyses phosphoenolpyruvate + UDP-N-acetyl-alpha-D-glucosamine = UDP-N-acetyl-3-O-(1-carboxyvinyl)-alpha-D-glucosamine + phosphate. The protein operates within cell wall biogenesis; peptidoglycan biosynthesis. Cell wall formation. Adds enolpyruvyl to UDP-N-acetylglucosamine. This chain is UDP-N-acetylglucosamine 1-carboxyvinyltransferase, found in Rickettsia akari (strain Hartford).